Reading from the N-terminus, the 35-residue chain is U1-theraphotoxin-Hhn1a (35 aa).

Cystine bridges form between Cys2/Cys16, Cys9/Cys21, and Cys15/Cys28.

The protein belongs to the neurotoxin 10 (Hwtx-1) family. 24 (Hwtx-6) subfamily. As to expression, expressed by the venom gland.

It localises to the secreted. In terms of biological role, gating-modifier toxin that dose-dependently inhibits inactivation of voltage-gated sodium channels and reduces the peak of sodium current in cockroach DUM neurons. In vivo, reversibly paralyzes cockroaches for several hours, paralyzes rat after intracerebroventricular injection and blocks the neuromuscular transmission of the isolated rat phrenic nerve-diaphragm preparation. This chain is U1-theraphotoxin-Hhn1a, found in Cyriopagopus hainanus (Chinese bird spider).